A 161-amino-acid chain; its full sequence is Anaerobic nitrite reductase GLB1 (161 aa).

In terms of domain architecture, Globin spans 9 to 157 (VFTEEQEALV…LVAAIKSEMK (149 aa)). The Homodimerization motif lies at 42-46 (EIAPS). S52, K66, H70, R100, and H105 together coordinate heme b. The short motif at 112 to 123 (NEHFETRFALLE) is the Homodimerization element.

It belongs to the plant globin family. In terms of assembly, homodimer. Heme b is required as a cofactor. In terms of tissue distribution, root specific.

Its subcellular location is the cytoplasm. It localises to the nucleus. It catalyses the reaction Fe(III)-heme b-[protein] + nitric oxide + H2O = Fe(II)-heme b-[protein] + nitrite + 2 H(+). In terms of biological role, phytoglobin that reduces nitrite to nitric oxide (NO) under anoxic conditions (e.g. during flooding or in waterlogged soil) and upon root nodulation. Required for general plant development and during nodulation, especially for the onset of symbiosis. Monitors nitric oxide (NO) levels during early phase of the nitrogen-fixing symbiosis and buffers oxygen in functioning nodules. May not function as an oxygen storage or transport protein. Has an unusually high affinity for O(2) through a hexacoordinate heme iron because of a very low dissociation constant. The chain is Anaerobic nitrite reductase GLB1 (GLB1) from Trema tomentosum (Peach-leaf poison-bush).